Here is a 370-residue protein sequence, read N- to C-terminus: Phospho-N-acetylmuramoyl-pentapeptide-transferase (370 aa).

Helical transmembrane passes span 31–51 (LTSM…LYGL), 73–93 (TMGG…WGNL), 98–118 (IIVL…DDYM), 135–155 (LLSI…TGVI), 177–197 (GPVL…IIGS), 209–229 (GLAT…AYVS), 251–271 (VFLS…AHPA), 273–293 (VFMG…IVIL), 298–318 (ILLL…ILQV), and 347–367 (KIVI…LSTL).

Belongs to the glycosyltransferase 4 family. MraY subfamily. It depends on Mg(2+) as a cofactor.

The protein localises to the cell inner membrane. It catalyses the reaction UDP-N-acetyl-alpha-D-muramoyl-L-alanyl-gamma-D-glutamyl-meso-2,6-diaminopimeloyl-D-alanyl-D-alanine + di-trans,octa-cis-undecaprenyl phosphate = di-trans,octa-cis-undecaprenyl diphospho-N-acetyl-alpha-D-muramoyl-L-alanyl-D-glutamyl-meso-2,6-diaminopimeloyl-D-alanyl-D-alanine + UMP. It functions in the pathway cell wall biogenesis; peptidoglycan biosynthesis. Its function is as follows. Catalyzes the initial step of the lipid cycle reactions in the biosynthesis of the cell wall peptidoglycan: transfers peptidoglycan precursor phospho-MurNAc-pentapeptide from UDP-MurNAc-pentapeptide onto the lipid carrier undecaprenyl phosphate, yielding undecaprenyl-pyrophosphoryl-MurNAc-pentapeptide, known as lipid I. This Leptospira borgpetersenii serovar Hardjo-bovis (strain JB197) protein is Phospho-N-acetylmuramoyl-pentapeptide-transferase.